Consider the following 424-residue polypeptide: Serine--tRNA ligase (424 aa).

Threonine 231–glutamate 233 contacts L-serine. ATP is bound by residues arginine 262–glutamate 264 and valine 278. An L-serine-binding site is contributed by glutamate 285. Residue glutamate 349–serine 352 coordinates ATP. L-serine is bound at residue serine 384.

This sequence belongs to the class-II aminoacyl-tRNA synthetase family. Type-1 seryl-tRNA synthetase subfamily. As to quaternary structure, homodimer. The tRNA molecule binds across the dimer.

It localises to the cytoplasm. It carries out the reaction tRNA(Ser) + L-serine + ATP = L-seryl-tRNA(Ser) + AMP + diphosphate + H(+). The enzyme catalyses tRNA(Sec) + L-serine + ATP = L-seryl-tRNA(Sec) + AMP + diphosphate + H(+). The protein operates within aminoacyl-tRNA biosynthesis; selenocysteinyl-tRNA(Sec) biosynthesis; L-seryl-tRNA(Sec) from L-serine and tRNA(Sec): step 1/1. Its function is as follows. Catalyzes the attachment of serine to tRNA(Ser). Is also able to aminoacylate tRNA(Sec) with serine, to form the misacylated tRNA L-seryl-tRNA(Sec), which will be further converted into selenocysteinyl-tRNA(Sec). The protein is Serine--tRNA ligase of Chlamydia abortus (strain DSM 27085 / S26/3) (Chlamydophila abortus).